The following is a 107-amino-acid chain: Integration host factor subunit beta (107 aa).

The interval 55–107 (RRPARVGRNPKSGEKVQVPEKHVPHFKPGKELRERVDGRAGEPLKNDEPEDAQ) is disordered. Over residues 65-101 (KSGEKVQVPEKHVPHFKPGKELRERVDGRAGEPLKND) the composition is skewed to basic and acidic residues.

This sequence belongs to the bacterial histone-like protein family. In terms of assembly, heterodimer of an alpha and a beta chain.

Its function is as follows. This protein is one of the two subunits of integration host factor, a specific DNA-binding protein that functions in genetic recombination as well as in transcriptional and translational control. The polypeptide is Integration host factor subunit beta (Burkholderia pseudomallei (strain K96243)).